Reading from the N-terminus, the 347-residue chain is tRNA pseudouridine synthase D (347 aa).

Residue Asp-81 is the Nucleophile of the active site. One can recognise a TRUD domain in the interval 158 to 305 (GVPNYFGSQR…RHDRREIALK (148 aa)).

This sequence belongs to the pseudouridine synthase TruD family.

It carries out the reaction uridine(13) in tRNA = pseudouridine(13) in tRNA. In terms of biological role, responsible for synthesis of pseudouridine from uracil-13 in transfer RNAs. In Vibrio parahaemolyticus serotype O3:K6 (strain RIMD 2210633), this protein is tRNA pseudouridine synthase D.